The chain runs to 207 residues: Small ribosomal subunit protein uS4 (207 aa).

Residues 31–54 are disordered; sequence KSKFETKPGQHGRTSGSRTSDFGL. Polar residues predominate over residues 42–52; sequence GRTSGSRTSDF. The S4 RNA-binding domain maps to 97–158; it reads SRLDNVVYRM…KAKKQLRVTE (62 aa).

The protein belongs to the universal ribosomal protein uS4 family. In terms of assembly, part of the 30S ribosomal subunit. Contacts protein S5. The interaction surface between S4 and S5 is involved in control of translational fidelity.

Its function is as follows. One of the primary rRNA binding proteins, it binds directly to 16S rRNA where it nucleates assembly of the body of the 30S subunit. In terms of biological role, with S5 and S12 plays an important role in translational accuracy. In Methylibium petroleiphilum (strain ATCC BAA-1232 / LMG 22953 / PM1), this protein is Small ribosomal subunit protein uS4.